A 96-amino-acid polypeptide reads, in one-letter code: Small ribosomal subunit protein bS6 (96 aa).

It belongs to the bacterial ribosomal protein bS6 family.

Its function is as follows. Binds together with bS18 to 16S ribosomal RNA. This is Small ribosomal subunit protein bS6 from Natranaerobius thermophilus (strain ATCC BAA-1301 / DSM 18059 / JW/NM-WN-LF).